The chain runs to 183 residues: DELTA-miturgitoxin-Cp1b (183 aa).

The first 20 residues, 1–20, serve as a signal peptide directing secretion; that stretch reads MKFSLFFSVFFLAVLHACLS. Residues 21-47 constitute a propeptide that is removed on maturation; sequence ESEIDLEDEEHFMSSDSFLSEIQDESR. A Processing quadruplet motif motif is present at residues 44 to 47; the sequence is DESR. 8 disulfide bridges follow: cysteine 51–cysteine 66, cysteine 58–cysteine 75, cysteine 65–cysteine 88, cysteine 77–cysteine 86, cysteine 115–cysteine 130, cysteine 122–cysteine 139, cysteine 129–cysteine 157, and cysteine 141–cysteine 155. Residues 164–177 are predicted alpha-helix; the sequence is QAIEGALRIAKKLI. Tryptophan 181 carries the tryptophan amide modification.

This sequence belongs to the neurotoxin 19 (CSTX) family. Double-CSTX subfamily. Cleavage of the propeptide depends on the processing quadruplet motif (XXXR, with at least one of X being E). In terms of tissue distribution, expressed by the venom gland.

The protein resides in the secreted. Its subcellular location is the target cell membrane. In terms of biological role, spider venom toxin that exhibits cytolytic activity by forming an alpha-helix across the membrane. Lethal to insect larvae. Causes instant paralysis and death in the larvae of the flesh fly (S.carnaria) at doses of 20 ug/g, at doses of less than 10 ug/g causes reversible paralysis. Has cytolytic activity against insect Sf9 cells. Causes stable and irreversible depolarization of fly muscle fibers, leading to contracture at higher toxin concentrations. Destabilizes membranes. The protein is DELTA-miturgitoxin-Cp1b of Cheiracanthium punctorium (Yellow sac spider).